A 497-amino-acid chain; its full sequence is MSLQKHGLLFNNNKFSDCKLVLDDGNVQVTLNVHKCLLYMNSLYFQAMFDNFKEQEYSEIKIRVQNSQIATDVIKSFYEKSNVINADWQYQLDYAIETKFFGVEYVLDKNIIVPYIYFDLFVDKIELIGYNNTTLNMILNNLPLDYDLDKFPTDFLEGLLVSSTEYDIFLSNKHCFYVWSVTDNKFTYSKEIPLELYYSYLDNDKIYKFTEHNSLICFNKKTDRHKSILLYDNDKIIKFDTEGVIYYLPENNQIILSHVERTTTGCDYKISLFCLETKQLIRTFHSRNYFGNEIILQISVSHDKIIVFGDDVQVKNFSSGVCLFTINQNESGVCIACDPEWSYFAIGSEDYDTEDQKITIYDLSNGNKVKTLNHRDSIRDILWTSKYIIAHNNENIYFYETNNYELVKKLDYKNNGLIKKIDCFDDSEFLYVLTNNSKMFQINMDSLENTDSNNISTEICFTQIGRFCDFKTIKNSNYHKSKLIKKTLEQRRRMDKN.

The region spanning 16-86 (SDCKLVLDDG…FYEKSNVINA (71 aa)) is the BTB domain.

The protein belongs to the mimivirus BTB/WD family.

This is Putative BTB/POZ domain-containing protein R738 from Acanthamoeba polyphaga (Amoeba).